A 465-amino-acid polypeptide reads, in one-letter code: WAS protein family homolog 2 (465 aa).

A required for WASH complex assembly region spans residues 1–54 (MTPVRMQHSLAGQTYAVPLIQPDLRREEAVQQMADALQYLQKVSGDIFSRISQQ). Residues 1–167 (MTPVRMQHSL…EGLGGLPSNI (167 aa)) form a WHD1 region. A Glycyl lysine isopeptide (Lys-Gly) (interchain with G-Cter in ubiquitin) cross-link involves residue Lys-220. Disordered regions lie at residues 297-407 (QDGV…QGGH) and 422-465 (GISG…DWES). Over residues 302–314 (TPPPPPPPPPPAP) the composition is skewed to pro residues. A VCA region spans residues 349–465 (QGAPREVVDP…AEEDEDDWES (117 aa)). Residues 361-383 (GRATLLESIRQAGGIGKAKLRSM) enclose the WH2 domain. The span at 382-398 (SMKERKLEKKKQKEQEQ) shows a compositional bias: basic and acidic residues. The span at 424-436 (SGKGPGAGEGPGG) shows a compositional bias: gly residues. The segment covering 456 to 465 (AEEDEDDWES) has biased composition (acidic residues).

The protein belongs to the WASH1 family. Component of the WASH core complex also described as WASH regulatory complex (SHRC) composed of WASH (WASHC1, WASH2P or WASH3P), WASHC2 (WASHC2A or WASHC2C), WASHC3, WASHC4 and WASHC5. The WASH core complex associates with the F-actin-capping protein dimer (formed by CAPZA1, CAPZA2 or CAPZA3 and CAPZB) in a transient or substoichiometric manner which was initially described as WASH complex. Interacts (via WHD1 region) with WASHC2C; the interaction is direct. Interacts with alpha-tubulin. Interacts with BECN1; WASHC1 and AMBRA1 can competitively interact with BECN1. Interacts with BLOC1S2; may associate with the BLOC-1 complex. Interacts with tubulin gamma chain (TUBG1 or TUBG2). Interacts with EXOC1, EXOC4, EXOC8; in MMP14-positive endosomes in breast tumor cells; indicative for an association with the exocyst complex.

The protein localises to the early endosome membrane. Its subcellular location is the recycling endosome membrane. It is found in the late endosome. It localises to the cytoplasmic vesicle. The protein resides in the autophagosome. The protein localises to the cytoplasm. Its subcellular location is the cytoskeleton. It is found in the microtubule organizing center. It localises to the centrosome. The protein resides in the centriole. Functionally, acts as a nucleation-promoting factor at the surface of endosomes, where it recruits and activates the Arp2/3 complex to induce actin polymerization, playing a key role in the fission of tubules that serve as transport intermediates during endosome sorting. Involved in endocytic trafficking of EGF. Involved in transferrin receptor recycling. Regulates the trafficking of endosomal alpha5beta1 integrin to the plasma membrane and involved in invasive cell migration. In T-cells involved in endosome-to-membrane recycling of receptors including T-cell receptor (TCR), CD28 and ITGAL; proposed to be implicated in T-cell proliferation and effector function. In dendritic cells involved in endosome-to-membrane recycling of major histocompatibility complex (MHC) class II probably involving retromer and subsequently allowing antigen sampling, loading and presentation during T-cell activation. Involved in Arp2/3 complex-dependent actin assembly driving Salmonella typhimurium invasion independent of ruffling. Involved in the exocytosis of MMP14 leading to matrix remodeling during invasive migration and implicating late endosome-to-plasma membrane tubular connections and cooperation with the exocyst complex. Involved in negative regulation of autophagy independently from its role in endosomal sorting by inhibiting BECN1 ubiquitination to inactivate PIK3C3/Vps34 activity. The chain is WAS protein family homolog 2 (WASH2P) from Homo sapiens (Human).